The sequence spans 601 residues: Potassium voltage-gated channel subfamily A member 5 (601 aa).

The segment at 1–200 is tetramerization domain; sequence MEIALVPLEN…FYQLGDEAME (200 aa). Residues 1–236 lie on the Cytoplasmic side of the membrane; it reads MEIALVPLEN…LIFEYPESSG (236 aa). Residues 19-93 form a disordered region; it reads GGEAGTGCSQ…DEEGEGDPAL (75 aa). The segment covering 65–74 has biased composition (pro residues); the sequence is RPLPPLPQDP. Residue Lys-210 forms a Glycyl lysine isopeptide (Lys-Gly) (interchain with G-Cter in SUMO) linkage. The helical transmembrane segment at 237-258 threads the bilayer; that stretch reads SARGIAIVSVLVILISIITFCL. At 259-312 the chain is on the extracellular side; the sequence is ETLPEFRDERELLRHPPVPHQPLGPSRGANGSGPLAPPSGPTVAPLLPRTLADP. The segment at 275–297 is disordered; it reads PVPHQPLGPSRGANGSGPLAPPS. The N-linked (GlcNAc...) asparagine glycan is linked to Asn-288. A helical membrane pass occupies residues 313 to 334; the sequence is FFIVETTCVIWFTFELLVRFFA. Cys-335 carries S-palmitoyl cysteine lipidation. The Cytoplasmic portion of the chain corresponds to 335–345; sequence CPSKAEFSRNI. The chain crosses the membrane as a helical span at residues 346 to 366; sequence MNIIDVVAIFPYFITLGTELA. The Extracellular portion of the chain corresponds to 367–383; sequence EQPGGGGGGQNGQQAMS. Residues 384–404 traverse the membrane as a helical; Voltage-sensor segment; sequence LAILRVIRLVRVFRIFKLSRH. Topologically, residues 405–419 are cytoplasmic; it reads SKGLQILGKTLQASM. Residues 406 to 419 are S4-S5 linker; sequence KGLQILGKTLQASM. Residues 420-441 traverse the membrane as a helical segment; that stretch reads RELGLLIFFLFIGVILFSSAVY. The Extracellular segment spans residues 442 to 455; the sequence is FAEADNQETHFSSI. Residues 456-467 constitute an intramembrane region (helical); it reads PDAFWWAVVTMT. The short motif at 468–473 is the Selectivity filter element; sequence TVGYGD. The stretch at 468 to 475 is an intramembrane region; sequence TVGYGDMR. The Extracellular portion of the chain corresponds to 476–482; it reads PVTVGGK. The helical transmembrane segment at 483–511 threads the bilayer; it reads IVGSLCAIAGVLTIALPVPVIVSNFNYFY. The Cytoplasmic portion of the chain corresponds to 512 to 601; that stretch reads HRETDHEEQA…CLDTSRETDL (90 aa). Residues 521-545 form a disordered region; sequence AALKEEQGSQSHGTGLDSGGPRKAS. Lys-524 is covalently cross-linked (Glycyl lysine isopeptide (Lys-Gly) (interchain with G-Cter in SUMO)). A PDZ-binding motif is present at residues 599–601; it reads TDL.

The protein belongs to the potassium channel family. A (Shaker) (TC 1.A.1.2) subfamily. Kv1.5/KCNA5 sub-subfamily. As to quaternary structure, homotetramer and heterotetramer of potassium channel proteins. Interacts with DLG1, which enhances channel currents. Forms a ternary complex with DLG1 and CAV3. Interacts with KCNAB1. Interacts with UBE2I. Interacts with XIRP2; the interaction is required for normal action potential configuration in the heart. In terms of processing, glycosylated. Sumoylated on Lys-210, and Lys-524, preferentially with SUMO3. Sumoylation regulates the voltage sensitivity of the channel.

Its subcellular location is the cell membrane. It carries out the reaction K(+)(in) = K(+)(out). Functionally, voltage-gated potassium channel that mediates transmembrane potassium transport in excitable membranes. Forms tetrameric potassium-selective channels through which potassium ions pass in accordance with their electrochemical gradient. The channel alternates between opened and closed conformations in response to the voltage difference across the membrane. Can form functional homotetrameric channels and heterotetrameric channels that contain variable proportions of KCNA1, KCNA2, KCNA4, KCNA5, and possibly other family members as well; channel properties depend on the type of alpha subunits that are part of the channel. Channel properties are modulated by cytoplasmic beta subunits that regulate the subcellular location of the alpha subunits and promote rapid inactivation. Homotetrameric channels display rapid activation and slow inactivation. Required for normal electrical conduction including formation of the infranodal ventricular conduction system and normal action potential configuration, as a result of its interaction with XIRP2. May play a role in regulating the secretion of insulin in normal pancreatic islets. The chain is Potassium voltage-gated channel subfamily A member 5 (KCNA5) from Mustela putorius furo (European domestic ferret).